Here is a 342-residue protein sequence, read N- to C-terminus: Glycerol-3-phosphate dehydrogenase [NAD(P)+] (342 aa).

NADPH is bound by residues tryptophan 11, arginine 31, and lysine 102. Residues lysine 102 and glycine 132 each coordinate sn-glycerol 3-phosphate. Alanine 136 lines the NADPH pocket. 5 residues coordinate sn-glycerol 3-phosphate: lysine 187, aspartate 240, serine 250, arginine 251, and asparagine 252. The active-site Proton acceptor is lysine 187. Residue arginine 251 participates in NADPH binding. Residue glutamate 277 participates in NADPH binding.

It belongs to the NAD-dependent glycerol-3-phosphate dehydrogenase family.

The protein resides in the cytoplasm. The enzyme catalyses sn-glycerol 3-phosphate + NAD(+) = dihydroxyacetone phosphate + NADH + H(+). The catalysed reaction is sn-glycerol 3-phosphate + NADP(+) = dihydroxyacetone phosphate + NADPH + H(+). It participates in membrane lipid metabolism; glycerophospholipid metabolism. In terms of biological role, catalyzes the reduction of the glycolytic intermediate dihydroxyacetone phosphate (DHAP) to sn-glycerol 3-phosphate (G3P), the key precursor for phospholipid synthesis. This chain is Glycerol-3-phosphate dehydrogenase [NAD(P)+], found in Symbiobacterium thermophilum (strain DSM 24528 / JCM 14929 / IAM 14863 / T).